The sequence spans 417 residues: Serine/threonine-protein kinase PkaB (417 aa).

The Protein kinase domain occupies 9-270 (YTAHQILGRG…ELSARLRELL (262 aa)). Residues 15 to 23 (LGRGSAGTV) and lysine 36 contribute to the ATP site. Aspartate 130 functions as the Proton acceptor in the catalytic mechanism. 2 disordered regions span residues 279–371 (LDVD…RAAT) and 395–417 (LATG…PAAP). Acidic residues predominate over residues 280 to 293 (DVDEPDAEQPEDAP). Composition is skewed to low complexity over residues 294 to 308 (DASA…STAE) and 349 to 368 (GTAR…ARNR). Residues 408 to 417 (DTRNSAPAAP) show a composition bias toward polar residues.

The protein belongs to the protein kinase superfamily. Ser/Thr protein kinase family. Post-translationally, autophosphorylated mainly at Thr.

The catalysed reaction is L-seryl-[protein] + ATP = O-phospho-L-seryl-[protein] + ADP + H(+). It catalyses the reaction L-threonyl-[protein] + ATP = O-phospho-L-threonyl-[protein] + ADP + H(+). This is Serine/threonine-protein kinase PkaB (pkaB) from Streptomyces coelicolor (strain ATCC BAA-471 / A3(2) / M145).